We begin with the raw amino-acid sequence, 356 residues long: Histidinol-phosphate aminotransferase (356 aa).

N6-(pyridoxal phosphate)lysine is present on Lys-213.

This sequence belongs to the class-II pyridoxal-phosphate-dependent aminotransferase family. Histidinol-phosphate aminotransferase subfamily. Homodimer. The cofactor is pyridoxal 5'-phosphate.

The catalysed reaction is L-histidinol phosphate + 2-oxoglutarate = 3-(imidazol-4-yl)-2-oxopropyl phosphate + L-glutamate. The protein operates within amino-acid biosynthesis; L-histidine biosynthesis; L-histidine from 5-phospho-alpha-D-ribose 1-diphosphate: step 7/9. This chain is Histidinol-phosphate aminotransferase, found in Clostridium novyi (strain NT).